Consider the following 119-residue polypeptide: uncharacterized protein (119 aa).

The first 26 residues, 1-26, serve as a signal peptide directing secretion; it reads MNKLKRLSMLTVMIASVFIFSSHALA. The region spanning 30–104 is the SH3b domain; it reads YTVSTSSGAP…IVPGFVSDTY (75 aa).

This sequence to B.subtilis YraJ.

This is an uncharacterized protein from Bacillus subtilis (strain 168).